We begin with the raw amino-acid sequence, 962 residues long: Protease 3 (962 aa).

Positions 1-23 (MPRSTWFKALLLLVALWGPAVQA) are cleaved as a signal peptide. His-88 serves as a coordination point for Zn(2+). The active-site Proton acceptor is Glu-91. The Zn(2+) site is built by His-92 and Glu-169.

This sequence belongs to the peptidase M16 family. Monomer. Zn(2+) serves as cofactor.

Its subcellular location is the periplasm. The enzyme catalyses Preferential cleavage of 16-Tyr-|-Leu-17 and 25-Phe-|-Tyr-26 bonds of oxidized insulin B chain. Also acts on other substrates of Mw less than 7 kDa such as insulin and glucagon.. Its function is as follows. Endopeptidase that degrades small peptides of less than 7 kDa, such as glucagon and insulin. The polypeptide is Protease 3 (ptrA) (Salmonella typhimurium (strain LT2 / SGSC1412 / ATCC 700720)).